We begin with the raw amino-acid sequence, 266 residues long: Undecaprenyl-diphosphatase (266 aa).

A run of 8 helical transmembrane segments spans residues 1 to 21 (MNIF…FLPI), 43 to 63 (FDVV…QAMI), 83 to 103 (SKLA…GMIF), 114 to 134 (VEII…ASWF), 144 to 164 (TISW…LIPG), 186 to 206 (IQFA…LILI), 219 to 239 (LLAM…VFFI), and 245 to 265 (VGMM…FFFI).

Belongs to the UppP family.

The protein localises to the cell inner membrane. The catalysed reaction is di-trans,octa-cis-undecaprenyl diphosphate + H2O = di-trans,octa-cis-undecaprenyl phosphate + phosphate + H(+). Functionally, catalyzes the dephosphorylation of undecaprenyl diphosphate (UPP). Confers resistance to bacitracin. The polypeptide is Undecaprenyl-diphosphatase (Ruthia magnifica subsp. Calyptogena magnifica).